A 173-amino-acid chain; its full sequence is MKTAHLVVVVCFLAGALQTAVALKEEDCEVCVKTVRRFADSLDDTTKKDYRKIETSFKKFCSGQKNKEHRFCYYLGGLEESATGILNELSKPLSWSMPAEKICEKLKKKDAQICDLRYEKQIDLNSVDLKKLKVRDLKKILNDWDESCDGCLEKSDFIKRIEELKPKYAHGEL.

Residues 1-22 form the signal peptide; sequence MKTAHLVVVVCFLAGALQTAVA. 4 disulfide bridges follow: Cys-28/Cys-114, Cys-31/Cys-103, Cys-61/Cys-72, and Cys-148/Cys-151.

This sequence belongs to the ARMET family.

It is found in the secreted. In terms of biological role, required during the maturation of the embryonic nervous system for maintenance of neuronal and cuticular connectivity. Essential for maintenance of dopaminergic neurons and dopamine levels. The chain is Mesencephalic astrocyte-derived neurotrophic factor homolog from Drosophila ananassae (Fruit fly).